We begin with the raw amino-acid sequence, 256 residues long: Hypodermin-A (256 aa).

The N-terminal stretch at 1-22 is a signal peptide; that stretch reads MLKFVILLCSIAYVFGAVVPLG. A propeptide spans 23–30 (activation peptide); the sequence is MLSQSDGR. The 224-residue stretch at 31 to 254 folds into the Peptidase S1 domain; sequence IVGGVESKIE…VRSLIVSNAE (224 aa). Cys56 and Cys72 are oxidised to a cystine. Residues His71 and Asp116 each act as charge relay system in the active site. Cystine bridges form between Cys180-Cys197 and Cys206-Cys230. Ser210 (charge relay system) is an active-site residue.

It belongs to the peptidase S1 family.

The protein resides in the secreted. Its function is as follows. Specificity, limited to carboxyl side of arginine residue in B-chain of insulin. The polypeptide is Hypodermin-A (Hypoderma lineatum (Early cattle grub)).